The primary structure comprises 278 residues: Protoheme IX farnesyltransferase (278 aa).

9 consecutive transmembrane segments (helical) span residues valine 12–aspartate 32, leucine 36–tyrosine 56, proline 72–alanine 92, leucine 105–tryptophan 124, tryptophan 130–leucine 150, leucine 157–leucine 177, alanine 204–phenylalanine 224, leucine 228–alanine 248, and methionine 257–phenylalanine 277.

The protein belongs to the UbiA prenyltransferase family. Protoheme IX farnesyltransferase subfamily.

It localises to the cell membrane. The catalysed reaction is heme b + (2E,6E)-farnesyl diphosphate + H2O = Fe(II)-heme o + diphosphate. It functions in the pathway porphyrin-containing compound metabolism; heme O biosynthesis; heme O from protoheme: step 1/1. Its function is as follows. Converts heme B (protoheme IX) to heme O by substitution of the vinyl group on carbon 2 of heme B porphyrin ring with a hydroxyethyl farnesyl side group. The chain is Protoheme IX farnesyltransferase from Pyrobaculum neutrophilum (strain DSM 2338 / JCM 9278 / NBRC 100436 / V24Sta) (Thermoproteus neutrophilus).